Reading from the N-terminus, the 100-residue chain is Small ribosomal subunit protein uS14 (100 aa).

It belongs to the universal ribosomal protein uS14 family. As to quaternary structure, part of the 30S ribosomal subunit. Contacts proteins S3 and S10.

Functionally, binds 16S rRNA, required for the assembly of 30S particles and may also be responsible for determining the conformation of the 16S rRNA at the A site. This Synechococcus sp. (strain CC9902) protein is Small ribosomal subunit protein uS14.